Consider the following 288-residue polypeptide: Cytochrome b-c1 complex catalytic subunit, mitochondrial (288 aa).

A helical membrane pass occupies residues 12–34; it reads SMVQKFIAGGVGVTGLTASYLLY. The 154-residue stretch at 69–222 folds into the Cytochrome c domain; that stretch reads ASIRRGFQVY…DLVEYEDGTP (154 aa). 3 residues coordinate heme c: Cys82, Cys85, and His86. Over residues 111 to 121 the composition is skewed to acidic residues; the sequence is EELEYDDEPDD. The tract at residues 111–138 is disordered; it reads EELEYDDEPDDEGKPRKRPGKLADYIPG. A helical membrane pass occupies residues 250 to 268; it reads WGLKALVVLSSLYLLSIWV.

It belongs to the cytochrome c family. Component of the ubiquinol-cytochrome c oxidoreductase (cytochrome b-c1 complex, complex III, CIII), a multisubunit enzyme composed of 10 subunits. The complex is composed of 3 respiratory subunits cytochrome b (COB), cytochrome c1 (CYT1) and Rieske protein (RIP1), 2 core protein subunits COR1 and QCR2, and 5 low-molecular weight protein subunits QCR6, QCR7, QCR8, QCR9 and QCR10. The complex exists as an obligatory dimer and forms supercomplexes (SCs) in the inner mitochondrial membrane with a monomer or a dimer of cytochrome c oxidase (complex IV, CIV), resulting in 2 different assemblies (supercomplexes III(2)IV and III(2)IV(2)). Heme c serves as cofactor.

Its subcellular location is the mitochondrion inner membrane. It carries out the reaction a quinol + 2 Fe(III)-[cytochrome c](out) = a quinone + 2 Fe(II)-[cytochrome c](out) + 2 H(+)(out). Component of the ubiquinol-cytochrome c oxidoreductase, a multisubunit transmembrane complex that is part of the mitochondrial electron transport chain which drives oxidative phosphorylation. The complex plays an important role in the uptake of multiple carbon sources present in different host niches. The sequence is that of Cytochrome b-c1 complex catalytic subunit, mitochondrial from Candida albicans (strain SC5314 / ATCC MYA-2876) (Yeast).